Here is a 180-residue protein sequence, read N- to C-terminus: Signal peptidase complex subunit 2 (180 aa).

Over 1 to 45 (MSDERITVVNKWDGPTVKNGLDEVVKKILNDKVGWTEQHNLMNLR) the chain is Cytoplasmic. Residues 46–66 (LLISFIGVAFSAFACGYDFYA) traverse the membrane as a helical segment. Residues 67–72 (PFPKSK) are Lumenal-facing. A helical transmembrane segment spans residues 73–93 (IVLLVCSVSYFICMGVLQLFQ). Over 94-180 (WYVEKDCFYE…LWARLIRSEQ (87 aa)) the chain is Cytoplasmic.

This sequence belongs to the SPCS2 family. Component of the signal peptidase complex (SPC) composed of a catalytic subunit sec-11 and three accessory subunits spcs-1, spcs-2 and spcs-3. The complex induces a local thinning of the ER membrane which is used to measure the length of the signal peptide (SP) h-region of protein substrates. This ensures the selectivity of the complex towards h-regions shorter than 18-20 amino acids.

Its subcellular location is the endoplasmic reticulum membrane. Component of the signal peptidase complex (SPC) which catalyzes the cleavage of N-terminal signal sequences from nascent proteins as they are translocated into the lumen of the endoplasmic reticulum. Enhances the enzymatic activity of SPC and facilitates the interactions between different components of the translocation site. This chain is Signal peptidase complex subunit 2, found in Caenorhabditis briggsae.